A 332-amino-acid polypeptide reads, in one-letter code: MAVEPLRVLVTGAAGQIGYALVPMIARGIMLGANQPVILHMLDIPPAAEALNGVKMELVDAAFPLLKGVVATTDAAEACKGVNVAVMVGGFPRKEGMERKDVMSKNVSIYKAQASALEQHAAPNCKVLVVANPANTNALILKEFAPSIPEKNISCLTRLDHNRALGQISERLNVQVSDVKNVIIWGNHSSTQYPDVNHATVKTQGVDKPVRELVADDAWLNGEFITTVQQRGAAIIKARKLSSALSAASSACDHIHDWVLGTPEGTWVSMGVYSDGSYNVPAGIIYSFPVTCKNGEWTIVQGLPIDDDSRKKMDATAAELVEEKTLAYSCLT.

NAD(+) contacts are provided by residues 16-17 (QI), Asp-43, and Gly-90. Arg-99 serves as a coordination point for oxaloacetate. Positions 113 and 132 each coordinate NAD(+). Oxaloacetate contacts are provided by Asn-132, Arg-163, His-188, and Ser-243. The active-site Proton acceptor is the His-188.

It belongs to the LDH/MDH superfamily. MDH type 2 family. In terms of assembly, homodimer.

It localises to the cytoplasm. It catalyses the reaction (S)-malate + NAD(+) = oxaloacetate + NADH + H(+). The sequence is that of Malate dehydrogenase, cytoplasmic (MDH) from Mesembryanthemum crystallinum (Common ice plant).